Here is a 551-residue protein sequence, read N- to C-terminus: Chaperonin GroEL (551 aa).

ATP contacts are provided by residues 30-33 (TLGP), K51, 87-91 (DGTTT), G415, 478-480 (NAA), and D494.

This sequence belongs to the chaperonin (HSP60) family. In terms of assembly, forms a cylinder of 14 subunits composed of two heptameric rings stacked back-to-back. Interacts with the co-chaperonin GroES.

It localises to the cytoplasm. The enzyme catalyses ATP + H2O + a folded polypeptide = ADP + phosphate + an unfolded polypeptide.. Functionally, together with its co-chaperonin GroES, plays an essential role in assisting protein folding. The GroEL-GroES system forms a nano-cage that allows encapsulation of the non-native substrate proteins and provides a physical environment optimized to promote and accelerate protein folding. In Syntrophotalea carbinolica (strain DSM 2380 / NBRC 103641 / GraBd1) (Pelobacter carbinolicus), this protein is Chaperonin GroEL.